The sequence spans 693 residues: Polyribonucleotide nucleotidyltransferase (693 aa).

Residues Asp486 and Asp492 each contribute to the Mg(2+) site. The KH domain maps to 553–612; that stretch reads PRFSSMRIDTEKIKDVIGKGGATIRSITEQTGTTIEIEDDGSVKIAATDKAAAANARRLI. One can recognise an S1 motif domain in the interval 622 to 690; the sequence is GRIYDAKVTK…RQGRVRLSIK (69 aa).

The protein belongs to the polyribonucleotide nucleotidyltransferase family. In terms of assembly, component of the RNA degradosome, which is a multiprotein complex involved in RNA processing and mRNA degradation. Mg(2+) is required as a cofactor.

It is found in the cytoplasm. It carries out the reaction RNA(n+1) + phosphate = RNA(n) + a ribonucleoside 5'-diphosphate. Functionally, involved in mRNA degradation. Catalyzes the phosphorolysis of single-stranded polyribonucleotides processively in the 3'- to 5'-direction. This chain is Polyribonucleotide nucleotidyltransferase, found in Dichelobacter nodosus (strain VCS1703A).